We begin with the raw amino-acid sequence, 321 residues long: DNA-directed RNA polymerase subunit alpha (321 aa).

An alpha N-terminal domain (alpha-NTD) region spans residues 1–235 (MAYQIECLET…DLFSPLKEVP (235 aa)). Residues 252-321 (QIPIEQLNLS…TLPPQKAARN (70 aa)) are alpha C-terminal domain (alpha-CTD).

This sequence belongs to the RNA polymerase alpha chain family. Homodimer. In cyanobacteria the RNAP catalytic core is composed of 2 alpha, 1 beta, 1 beta', 1 gamma and 1 omega subunit. When a sigma factor is associated with the core the holoenzyme is formed, which can initiate transcription.

The enzyme catalyses RNA(n) + a ribonucleoside 5'-triphosphate = RNA(n+1) + diphosphate. In terms of biological role, DNA-dependent RNA polymerase catalyzes the transcription of DNA into RNA using the four ribonucleoside triphosphates as substrates. The polypeptide is DNA-directed RNA polymerase subunit alpha (Thermosynechococcus vestitus (strain NIES-2133 / IAM M-273 / BP-1)).